The following is a 509-amino-acid chain: Histidine ammonia-lyase (509 aa).

Positions 142-144 form a cross-link, 5-imidazolinone (Ala-Gly); sequence ASG. Residue S143 is modified to 2,3-didehydroalanine (Ser).

It belongs to the PAL/histidase family. Contains an active site 4-methylidene-imidazol-5-one (MIO), which is formed autocatalytically by cyclization and dehydration of residues Ala-Ser-Gly.

It is found in the cytoplasm. The catalysed reaction is L-histidine = trans-urocanate + NH4(+). It functions in the pathway amino-acid degradation; L-histidine degradation into L-glutamate; N-formimidoyl-L-glutamate from L-histidine: step 1/3. This is Histidine ammonia-lyase from Pseudomonas aeruginosa (strain LESB58).